Consider the following 239-residue polypeptide: Ribosomal RNA small subunit methyltransferase G (239 aa).

Residues Gly77, Phe82, 128–129 (AE), and Arg146 each bind S-adenosyl-L-methionine. Residues 217 to 239 (RRQTSKKYPRKPGTPNKSPLVES) are disordered.

It belongs to the methyltransferase superfamily. RNA methyltransferase RsmG family.

Its subcellular location is the cytoplasm. Its function is as follows. Specifically methylates the N7 position of guanine in position 535 of 16S rRNA. The protein is Ribosomal RNA small subunit methyltransferase G of Staphylococcus epidermidis (strain ATCC 12228 / FDA PCI 1200).